A 100-amino-acid polypeptide reads, in one-letter code: NADH-quinone oxidoreductase subunit K (100 aa).

Transmembrane regions (helical) follow at residues 4-24, 29-49, and 60-80; these read LSNY…GVLT, IVVF…FVAF, and IFVF…LALF.

This sequence belongs to the complex I subunit 4L family. In terms of assembly, NDH-1 is composed of 14 different subunits. Subunits NuoA, H, J, K, L, M, N constitute the membrane sector of the complex.

It localises to the cell inner membrane. The enzyme catalyses a quinone + NADH + 5 H(+)(in) = a quinol + NAD(+) + 4 H(+)(out). In terms of biological role, NDH-1 shuttles electrons from NADH, via FMN and iron-sulfur (Fe-S) centers, to quinones in the respiratory chain. The immediate electron acceptor for the enzyme in this species is believed to be ubiquinone. Couples the redox reaction to proton translocation (for every two electrons transferred, four hydrogen ions are translocated across the cytoplasmic membrane), and thus conserves the redox energy in a proton gradient. This is NADH-quinone oxidoreductase subunit K from Trichlorobacter lovleyi (strain ATCC BAA-1151 / DSM 17278 / SZ) (Geobacter lovleyi).